The chain runs to 190 residues: 3-isopropylmalate dehydratase small subunit (190 aa).

It belongs to the LeuD family. LeuD type 1 subfamily. In terms of assembly, heterodimer of LeuC and LeuD.

It carries out the reaction (2R,3S)-3-isopropylmalate = (2S)-2-isopropylmalate. The protein operates within amino-acid biosynthesis; L-leucine biosynthesis; L-leucine from 3-methyl-2-oxobutanoate: step 2/4. Its function is as follows. Catalyzes the isomerization between 2-isopropylmalate and 3-isopropylmalate, via the formation of 2-isopropylmaleate. The sequence is that of 3-isopropylmalate dehydratase small subunit from Staphylococcus aureus (strain JH1).